Here is a 642-residue protein sequence, read N- to C-terminus: Threonine--tRNA ligase (642 aa).

Positions 1–61 constitute a TGS domain; that stretch reads MPVITLPDGS…ETDVDLAIIT (61 aa). The tract at residues 243 to 534 is catalytic; sequence DHRKIGKQLD…LIEEYAGKFP (292 aa). The Zn(2+) site is built by C334, H385, and H511.

This sequence belongs to the class-II aminoacyl-tRNA synthetase family. As to quaternary structure, homodimer. Zn(2+) serves as cofactor.

The protein resides in the cytoplasm. The catalysed reaction is tRNA(Thr) + L-threonine + ATP = L-threonyl-tRNA(Thr) + AMP + diphosphate + H(+). Functionally, catalyzes the attachment of threonine to tRNA(Thr) in a two-step reaction: L-threonine is first activated by ATP to form Thr-AMP and then transferred to the acceptor end of tRNA(Thr). Also edits incorrectly charged L-seryl-tRNA(Thr). This chain is Threonine--tRNA ligase, found in Shewanella loihica (strain ATCC BAA-1088 / PV-4).